The primary structure comprises 386 residues: V-type proton ATPase subunit B 2 (386 aa).

It belongs to the ATPase alpha/beta chains family. In terms of assembly, V-ATPase is a heteromultimeric enzyme composed of a peripheral catalytic V1 complex (main components: subunits A, B, C, D, E, and F) attached to an integral membrane V0 proton pore complex (main component: the proteolipid protein).

Non-catalytic subunit of the peripheral V1 complex of vacuolar ATPase. V-ATPase is responsible for acidifying a variety of intracellular compartments in eukaryotic cells. This chain is V-type proton ATPase subunit B 2, found in Gossypium hirsutum (Upland cotton).